We begin with the raw amino-acid sequence, 40 residues long: Photosystem II reaction center protein J (40 aa).

A helical membrane pass occupies residues 8-28; the sequence is IPLWIIGTGAGILVIGLIGIF.

The protein belongs to the PsbJ family. As to quaternary structure, PSII is composed of 1 copy each of membrane proteins PsbA, PsbB, PsbC, PsbD, PsbE, PsbF, PsbH, PsbI, PsbJ, PsbK, PsbL, PsbM, PsbT, PsbX, PsbY, PsbZ, Psb30/Ycf12, at least 3 peripheral proteins of the oxygen-evolving complex and a large number of cofactors. It forms dimeric complexes.

It is found in the plastid. The protein localises to the chloroplast thylakoid membrane. Functionally, one of the components of the core complex of photosystem II (PSII). PSII is a light-driven water:plastoquinone oxidoreductase that uses light energy to abstract electrons from H(2)O, generating O(2) and a proton gradient subsequently used for ATP formation. It consists of a core antenna complex that captures photons, and an electron transfer chain that converts photonic excitation into a charge separation. The sequence is that of Photosystem II reaction center protein J from Aethionema grandiflorum (Persian stone-cress).